A 361-amino-acid polypeptide reads, in one-letter code: Phospho-N-acetylmuramoyl-pentapeptide-transferase (361 aa).

The next 10 helical transmembrane spans lie at 27-47, 72-92, 94-114, 133-153, 169-189, 200-220, 240-260, 264-284, 289-309, and 338-358; these read GAMV…IDHL, TPTM…LLWA, LHNP…FVGF, LRLA…IWAG, FAIN…VGAG, GLAI…AYLV, LAVL…FNAP, IFMG…IAVA, IVLA…IVQV, and QIVI…LSTL.

Belongs to the glycosyltransferase 4 family. MraY subfamily. It depends on Mg(2+) as a cofactor.

It is found in the cell inner membrane. It catalyses the reaction UDP-N-acetyl-alpha-D-muramoyl-L-alanyl-gamma-D-glutamyl-meso-2,6-diaminopimeloyl-D-alanyl-D-alanine + di-trans,octa-cis-undecaprenyl phosphate = di-trans,octa-cis-undecaprenyl diphospho-N-acetyl-alpha-D-muramoyl-L-alanyl-D-glutamyl-meso-2,6-diaminopimeloyl-D-alanyl-D-alanine + UMP. It participates in cell wall biogenesis; peptidoglycan biosynthesis. Catalyzes the initial step of the lipid cycle reactions in the biosynthesis of the cell wall peptidoglycan: transfers peptidoglycan precursor phospho-MurNAc-pentapeptide from UDP-MurNAc-pentapeptide onto the lipid carrier undecaprenyl phosphate, yielding undecaprenyl-pyrophosphoryl-MurNAc-pentapeptide, known as lipid I. In Afipia carboxidovorans (strain ATCC 49405 / DSM 1227 / KCTC 32145 / OM5) (Oligotropha carboxidovorans), this protein is Phospho-N-acetylmuramoyl-pentapeptide-transferase.